Consider the following 269-residue polypeptide: Prespore protein Dd31 (269 aa).

Residues 1–17 show a composition bias toward polar residues; the sequence is MEHNNNPGTPQMSSEFP. The interval 1–35 is disordered; that stretch reads MEHNNNPGTPQMSSEFPASTTQTSSSAAAYDNSSH. Residues 18-29 show a composition bias toward low complexity; that stretch reads ASTTQTSSSAAA. The next 4 membrane-spanning stretches (helical) occupy residues 111–131, 139–159, 177–197, and 225–245; these read FGIF…VVSI, VDNF…LYFL, YAYL…FVGF, and VSLF…IMYL.

It belongs to the SCAMP family.

It is found in the membrane. Its subcellular location is the spore coat. The protein is Prespore protein Dd31 (spiA) of Dictyostelium discoideum (Social amoeba).